The primary structure comprises 156 residues: Small ribosomal subunit protein uS7c (156 aa).

It belongs to the universal ribosomal protein uS7 family. In terms of assembly, part of the 30S ribosomal subunit.

The protein localises to the plastid. The protein resides in the chloroplast. Its function is as follows. One of the primary rRNA binding proteins, it binds directly to 16S rRNA where it nucleates assembly of the head domain of the 30S subunit. In Ostreococcus tauri, this protein is Small ribosomal subunit protein uS7c (rps7).